Here is a 253-residue protein sequence, read N- to C-terminus: Tryptophan synthase alpha chain (253 aa).

Residues Glu-48 and Asp-59 each act as proton acceptor in the active site.

Belongs to the TrpA family. Tetramer of two alpha and two beta chains.

It catalyses the reaction (1S,2R)-1-C-(indol-3-yl)glycerol 3-phosphate + L-serine = D-glyceraldehyde 3-phosphate + L-tryptophan + H2O. The protein operates within amino-acid biosynthesis; L-tryptophan biosynthesis; L-tryptophan from chorismate: step 5/5. Its function is as follows. The alpha subunit is responsible for the aldol cleavage of indoleglycerol phosphate to indole and glyceraldehyde 3-phosphate. In Caldicellulosiruptor saccharolyticus (strain ATCC 43494 / DSM 8903 / Tp8T 6331), this protein is Tryptophan synthase alpha chain.